The primary structure comprises 152 residues: Small ribosomal subunit protein uS13 (152 aa).

The tract at residues glycine 133–lysine 152 is disordered.

Belongs to the universal ribosomal protein uS13 family.

It localises to the cytoplasm. Functionally, located at the top of the head of the 40S subunit, it contacts several helices of the 18S rRNA. This chain is Small ribosomal subunit protein uS13 (RpS18), found in Spodoptera frugiperda (Fall armyworm).